The primary structure comprises 601 residues: Terpinolene synthase, chloroplastic (601 aa).

The transit peptide at 1–32 directs the protein to the chloroplast; sequence MSTFVISNSMHVGISFSFLHKLPQTPPPQVVC. 5 residues coordinate Mg(2+): D354, D358, D498, T502, and E506. Positions 354–358 match the DDXXD motif motif; sequence DDVYD.

It belongs to the terpene synthase family. Tpsd subfamily. Requires Mg(2+) as cofactor. Mn(2+) is required as a cofactor.

It localises to the plastid. The protein resides in the chloroplast. It carries out the reaction (2E)-geranyl diphosphate = terpinolene + diphosphate. It functions in the pathway secondary metabolite biosynthesis; terpenoid biosynthesis. In terms of biological role, monoterpene synthase that catalyzes the formation of terpinolene and other monoterpenes from geranyl diphosphate. The sequence is that of Terpinolene synthase, chloroplastic (TES) from Ocimum basilicum (Sweet basil).